The primary structure comprises 255 residues: Ribonuclease HII (255 aa).

The RNase H type-2 domain maps to 72-255; sequence RLIAGVDEVG…KTFAPVQSFR (184 aa). Positions 78, 79, and 170 each coordinate a divalent metal cation.

The protein belongs to the RNase HII family. It depends on Mn(2+) as a cofactor. Mg(2+) serves as cofactor.

It is found in the cytoplasm. The catalysed reaction is Endonucleolytic cleavage to 5'-phosphomonoester.. In terms of biological role, endonuclease that specifically degrades the RNA of RNA-DNA hybrids. This Bacillus subtilis (strain 168) protein is Ribonuclease HII (rnhB).